We begin with the raw amino-acid sequence, 274 residues long: Mitochondrial outer membrane protein porin 3 (274 aa).

Ser-76 is subject to Phosphoserine.

This sequence belongs to the eukaryotic mitochondrial porin (TC 1.B.8.1) family. Interacts with KIN14F/KP1. Interacts with FBA6 and GAPC1. Expressed in leaf tips, anthers and stigma.

It localises to the cell membrane. Its subcellular location is the mitochondrion outer membrane. Its function is as follows. Forms a channel through the mitochondrial outer membrane that allows diffusion of small hydrophilic molecules. The channel adopts an open conformation at low or zero membrane potential and a closed conformation at potentials above 30-40 mV. The open state has a weak anion selectivity whereas the closed state is cation-selective. This is Mitochondrial outer membrane protein porin 3 (VDAC3) from Arabidopsis thaliana (Mouse-ear cress).